The following is a 54-amino-acid chain: Ovomucoid (54 aa).

Residues 4-54 (VDCSDYPKPVCSPENMPVCGSDSKTYSNKCDFCNAVADSNGTLTLSHFGKC) form the Kazal-like domain. 3 disulfide bridges follow: cysteine 6-cysteine 36, cysteine 14-cysteine 33, and cysteine 22-cysteine 54. Asparagine 43 is a glycosylation site (N-linked (GlcNAc...) asparagine).

It is found in the secreted. The sequence is that of Ovomucoid from Nycticorax nycticorax (Black-crowned night-heron).